A 111-amino-acid chain; its full sequence is Large ribosomal subunit protein uL22 (111 aa).

It belongs to the universal ribosomal protein uL22 family. In terms of assembly, part of the 50S ribosomal subunit.

Its function is as follows. This protein binds specifically to 23S rRNA; its binding is stimulated by other ribosomal proteins, e.g. L4, L17, and L20. It is important during the early stages of 50S assembly. It makes multiple contacts with different domains of the 23S rRNA in the assembled 50S subunit and ribosome. The globular domain of the protein is located near the polypeptide exit tunnel on the outside of the subunit, while an extended beta-hairpin is found that lines the wall of the exit tunnel in the center of the 70S ribosome. In Clostridium acetobutylicum (strain ATCC 824 / DSM 792 / JCM 1419 / IAM 19013 / LMG 5710 / NBRC 13948 / NRRL B-527 / VKM B-1787 / 2291 / W), this protein is Large ribosomal subunit protein uL22.